We begin with the raw amino-acid sequence, 299 residues long: Coenzyme PQQ synthesis protein B (299 aa).

The protein belongs to the PqqB family.

It functions in the pathway cofactor biosynthesis; pyrroloquinoline quinone biosynthesis. In terms of biological role, may be involved in the transport of PQQ or its precursor to the periplasm. This Methylobacterium radiotolerans (strain ATCC 27329 / DSM 1819 / JCM 2831 / NBRC 15690 / NCIMB 10815 / 0-1) protein is Coenzyme PQQ synthesis protein B.